Here is a 179-residue protein sequence, read N- to C-terminus: ATP-dependent protease subunit HslV (179 aa).

T6 is a catalytic residue. S164, C167, and T170 together coordinate Na(+).

This sequence belongs to the peptidase T1B family. HslV subfamily. As to quaternary structure, a double ring-shaped homohexamer of HslV is capped on each side by a ring-shaped HslU homohexamer. The assembly of the HslU/HslV complex is dependent on binding of ATP.

The protein resides in the cytoplasm. It carries out the reaction ATP-dependent cleavage of peptide bonds with broad specificity.. Its activity is regulated as follows. Allosterically activated by HslU binding. Functionally, protease subunit of a proteasome-like degradation complex believed to be a general protein degrading machinery. This Listeria monocytogenes serotype 4b (strain CLIP80459) protein is ATP-dependent protease subunit HslV.